A 703-amino-acid chain; its full sequence is Ion-translocating oxidoreductase complex subunit C (703 aa).

2 consecutive 4Fe-4S ferredoxin-type domains span residues 368-397 (MAPQ…QQLY) and 407-436 (KARN…VQYY). 8 residues coordinate [4Fe-4S] cluster: cysteine 377, cysteine 380, cysteine 383, cysteine 387, cysteine 416, cysteine 419, cysteine 422, and cysteine 426. Disordered regions lie at residues 505–558 (AVPA…EDPR) and 653–674 (AQQA…EEDP). Over residues 524–539 (AAREARKAQARERRAQ) the composition is skewed to basic and acidic residues.

This sequence belongs to the 4Fe4S bacterial-type ferredoxin family. RnfC subfamily. The complex is composed of six subunits: RnfA, RnfB, RnfC, RnfD, RnfE and RnfG. It depends on [4Fe-4S] cluster as a cofactor.

Its subcellular location is the cell inner membrane. Part of a membrane-bound complex that couples electron transfer with translocation of ions across the membrane. In Serratia proteamaculans (strain 568), this protein is Ion-translocating oxidoreductase complex subunit C.